A 226-amino-acid chain; its full sequence is Ribonuclease 3 (226 aa).

An RNase III domain is found at 7–129 (LPRLCRTLGY…IIGAVYLDSD (123 aa)). Residue E42 coordinates Mg(2+). D46 is a catalytic residue. Residues D115 and E118 each contribute to the Mg(2+) site. E118 is an active-site residue. Residues 156–226 (DAKTLLQEHL…AAQVLELLKK (71 aa)) form the DRBM domain.

This sequence belongs to the ribonuclease III family. As to quaternary structure, homodimer. It depends on Mg(2+) as a cofactor.

Its subcellular location is the cytoplasm. It catalyses the reaction Endonucleolytic cleavage to 5'-phosphomonoester.. Functionally, digests double-stranded RNA. Involved in the processing of primary rRNA transcript to yield the immediate precursors to the large and small rRNAs (23S and 16S). Processes some mRNAs, and tRNAs when they are encoded in the rRNA operon. Processes pre-crRNA and tracrRNA of type II CRISPR loci if present in the organism. The polypeptide is Ribonuclease 3 (Shewanella baltica (strain OS185)).